We begin with the raw amino-acid sequence, 275 residues long: UPF0328 protein ECU05_0050 (275 aa).

This sequence belongs to the UPF0328 family.

This is UPF0328 protein ECU05_0050 from Encephalitozoon cuniculi (strain GB-M1) (Microsporidian parasite).